Here is a 121-residue protein sequence, read N- to C-terminus: Large ribosomal subunit protein bL20 (121 aa).

This sequence belongs to the bacterial ribosomal protein bL20 family.

Functionally, binds directly to 23S ribosomal RNA and is necessary for the in vitro assembly process of the 50S ribosomal subunit. It is not involved in the protein synthesizing functions of that subunit. The chain is Large ribosomal subunit protein bL20 from Methylorubrum populi (strain ATCC BAA-705 / NCIMB 13946 / BJ001) (Methylobacterium populi).